Here is a 226-residue protein sequence, read N- to C-terminus: MSCTEAPQPIPAGTTTTSTIIALGPTGRLSISVEGDLECLVCREPYNCARSPKLLSCQHTFCAVCLKLLLYVQEDTWSIPCPLCRKVTAVPGGLICSLRDQEAMVGRLALPCPEVRLCPQRLVGSAASATRPANWTGEEEQDTVSVNRVAARRLAVHLLLLALVIVLILPFIYPGVIRWVLAFVIALALLMSTLFCCHPQSQNSNWLCPRTLFCREQKQTQITSIA.

The RING-type zinc-finger motif lies at 39–85 (CLVCREPYNCARSPKLLSCQHTFCAVCLKLLLYVQEDTWSIPCPLCR). Transmembrane regions (helical) follow at residues 157–177 (HLLLLALVIVLILPFIYPGVI) and 179–199 (WVLAFVIALALLMSTLFCCHP).

As to quaternary structure, interacts with BNIP1. Polyubiquitinated. 'Lys-29'-linked autoubiquitination leads to proteasomal degradation.

The protein resides in the endoplasmic reticulum membrane. It carries out the reaction S-ubiquitinyl-[E2 ubiquitin-conjugating enzyme]-L-cysteine + [acceptor protein]-L-lysine = [E2 ubiquitin-conjugating enzyme]-L-cysteine + N(6)-ubiquitinyl-[acceptor protein]-L-lysine.. It functions in the pathway protein modification; protein ubiquitination. In terms of biological role, E3 ubiquitin protein ligase that is part of an apoptotic signaling pathway activated by endoplasmic reticulum stress. Stimulates the expression of proteins specific of the unfolded protein response (UPR), ubiquitinates BNIP1 and regulates its localization to the mitochondrion and induces calcium release from the endoplasmic reticulum that ultimately leads to cell apoptosis. Plays a role in the maintenance of intestinal homeostasis and clearance of enteric pathogens. Upon NOD2 stimulation, ubiquitinates the ER stress sensor activating transcription factor 6/ATF6 and promotes the unfolded protein response UPR. Participates in basal level of autophagy maintenance by regulating the ubiquitination of EPHB2. Upon stimulation by ligand EFNB1, ubiquitinates EPHB2 and further recruits MAP1LC3B for autophagy induction. Controls nutrient sensing by ubiquitinating Sestrin-2/SESN2, which is an intracellular sensor of cytosolic leucine and inhibitor of mTORC1 activity. This is E3 ubiquitin-protein ligase RNF186 from Mus musculus (Mouse).